The sequence spans 394 residues: MSKETFQRNKPHINIGTIGHVDHGKTTLTAAITRALSAEGLANFCDYSSIDNTPEEKARGITINASHVEYETPNRHYAHVDCPGHADYVKNMITGAAQMDGAILVVSATDGAMPQTKEHILLARQVGVPYIVVFLNKIDMISQEDAELVDLVEMELSELLEEKGYKGCPIIRGSALKALEGDASYVEKIRELMQAVDDNIPTPEREIDKPFLMPIEDVFSISGRGTVVTGRIERGVVKVGDKVQIVGLRDTRESIVTGVEMFRKELPEGQAGENVGLLLRGIGKNDVERGMVICQPNSVKSHTQFKGAVYILQKEEGGRHKPFFTGYRPQFFFRTTDVTGIVNLPEGTEMVMPGDNVEIDVQLISPVALEEGMRFAIREGGRTIGAGTISKIIA.

One can recognise a tr-type G domain in the interval 10–204; that stretch reads KPHINIGTIG…AVDDNIPTPE (195 aa). The segment at 19–26 is G1; that stretch reads GHVDHGKT. 19–26 contributes to the GTP binding site; it reads GHVDHGKT. Residue threonine 26 coordinates Mg(2+). Positions 60-64 are G2; the sequence is GITIN. The tract at residues 81–84 is G3; the sequence is DCPG. Residues 81–85 and 136–139 contribute to the GTP site; these read DCPGH and NKID. Residues 136-139 are G4; it reads NKID. Residues 174-176 form a G5 region; it reads SAL.

It belongs to the TRAFAC class translation factor GTPase superfamily. Classic translation factor GTPase family. EF-Tu/EF-1A subfamily. Monomer.

It is found in the cytoplasm. It carries out the reaction GTP + H2O = GDP + phosphate + H(+). Its function is as follows. GTP hydrolase that promotes the GTP-dependent binding of aminoacyl-tRNA to the A-site of ribosomes during protein biosynthesis. This chain is Elongation factor Tu, found in Chlamydia felis (strain Fe/C-56) (Chlamydophila felis).